The sequence spans 245 residues: Carboxymethylenebutenolidase homolog (245 aa).

A2 bears the N-acetylalanine mark. K36 bears the N6-acetyllysine mark. Catalysis depends on residues C132, D179, and H212. Residue S223 is modified to Phosphoserine.

The protein belongs to the dienelactone hydrolase family.

It localises to the cytoplasm. The protein localises to the cytosol. In terms of biological role, cysteine hydrolase. The chain is Carboxymethylenebutenolidase homolog (CMBL) from Pongo abelii (Sumatran orangutan).